Reading from the N-terminus, the 292-residue chain is 4-hydroxy-tetrahydrodipicolinate synthase (292 aa).

Thr-44 is a pyruvate binding site. The active-site Proton donor/acceptor is the Tyr-132. Lys-161 functions as the Schiff-base intermediate with substrate in the catalytic mechanism. Ile-203 lines the pyruvate pocket.

It belongs to the DapA family. As to quaternary structure, homotetramer; dimer of dimers.

It is found in the cytoplasm. It catalyses the reaction L-aspartate 4-semialdehyde + pyruvate = (2S,4S)-4-hydroxy-2,3,4,5-tetrahydrodipicolinate + H2O + H(+). It participates in amino-acid biosynthesis; L-lysine biosynthesis via DAP pathway; (S)-tetrahydrodipicolinate from L-aspartate: step 3/4. Its function is as follows. Catalyzes the condensation of (S)-aspartate-beta-semialdehyde [(S)-ASA] and pyruvate to 4-hydroxy-tetrahydrodipicolinate (HTPA). This Fervidobacterium nodosum (strain ATCC 35602 / DSM 5306 / Rt17-B1) protein is 4-hydroxy-tetrahydrodipicolinate synthase.